We begin with the raw amino-acid sequence, 410 residues long: Cysteine desulfurase IscS (410 aa).

Residues 80 to 81 (AT), asparagine 160, glutamine 188, and 208 to 210 (SGH) contribute to the pyridoxal 5'-phosphate site. The residue at position 211 (lysine 211) is an N6-(pyridoxal phosphate)lysine. Residue threonine 248 coordinates pyridoxal 5'-phosphate. Cysteine 334 serves as the catalytic Cysteine persulfide intermediate. Residue cysteine 334 coordinates [2Fe-2S] cluster.

Belongs to the class-V pyridoxal-phosphate-dependent aminotransferase family. NifS/IscS subfamily. Homodimer. Forms a heterotetramer with IscU, interacts with other sulfur acceptors. It depends on pyridoxal 5'-phosphate as a cofactor.

It localises to the cytoplasm. It carries out the reaction (sulfur carrier)-H + L-cysteine = (sulfur carrier)-SH + L-alanine. Its pathway is cofactor biosynthesis; iron-sulfur cluster biosynthesis. Master enzyme that delivers sulfur to a number of partners involved in Fe-S cluster assembly, tRNA modification or cofactor biosynthesis. Catalyzes the removal of elemental sulfur atoms from cysteine to produce alanine. Functions as a sulfur delivery protein for Fe-S cluster synthesis onto IscU, an Fe-S scaffold assembly protein, as well as other S acceptor proteins. The chain is Cysteine desulfurase IscS from Rickettsia prowazekii (strain Madrid E).